The following is an 88-amino-acid chain: Small ribosomal subunit protein bS20 (88 aa).

Belongs to the bacterial ribosomal protein bS20 family.

Its function is as follows. Binds directly to 16S ribosomal RNA. The polypeptide is Small ribosomal subunit protein bS20 (Bartonella quintana (strain Toulouse) (Rochalimaea quintana)).